A 179-amino-acid chain; its full sequence is GTP-dependent dephospho-CoA kinase (179 aa).

5 residues coordinate GTP: Asp-55, Val-57, Asp-74, Lys-76, and Glu-128.

It belongs to the GTP-dependent DPCK family.

It carries out the reaction 3'-dephospho-CoA + GTP = GDP + CoA + H(+). It functions in the pathway cofactor biosynthesis; coenzyme A biosynthesis. Its function is as follows. Catalyzes the GTP-dependent phosphorylation of the 3'-hydroxyl group of dephosphocoenzyme A to form coenzyme A (CoA). This Saccharolobus islandicus (strain M.16.27) (Sulfolobus islandicus) protein is GTP-dependent dephospho-CoA kinase.